Reading from the N-terminus, the 126-residue chain is MADKLYQMEVQAEPQYVAEQSSVANDVYVFAYRVRITNTGSEPAQLISRHWIITDANQQVQEVRGMGVVGEQPHLDPGQVFEYSSAAHITTPYGSMKGAYQMMADDGRRFEASIPEMTLVAPRVLH.

The 125-residue stretch at alanine 2–histidine 126 folds into the ApaG domain.

The chain is Protein ApaG from Chromobacterium violaceum (strain ATCC 12472 / DSM 30191 / JCM 1249 / CCUG 213 / NBRC 12614 / NCIMB 9131 / NCTC 9757 / MK).